The primary structure comprises 365 residues: Putative agmatine deiminase (365 aa).

Residues Glu-214 and Asp-220 each coordinate agmatine. The Amidino-cysteine intermediate role is filled by Cys-357.

It belongs to the agmatine deiminase family. As to quaternary structure, tetramer of two homodimers.

The catalysed reaction is agmatine + H2O = N-carbamoylputrescine + NH4(+). This is Putative agmatine deiminase from Enterococcus faecalis (strain ATCC 700802 / V583).